A 222-amino-acid polypeptide reads, in one-letter code: THAP domain-containing protein 6 (222 aa).

Residues 1–89 form a THAP-type zinc finger; the sequence is MVKCCSAIGC…LKPGVIPSIF (89 aa). Residues 139 to 142 carry the HCFC1-binding motif (HBM) motif; it reads EHSY. A coiled-coil region spans residues 149-194; sequence KKLKHKLDHVIGELEDTKESLRNVLDREKRFQKSLRKTIRELKDEC.

This Homo sapiens (Human) protein is THAP domain-containing protein 6 (THAP6).